Reading from the N-terminus, the 172-residue chain is S-ribosylhomocysteine lyase (172 aa).

Fe cation-binding residues include histidine 54, histidine 58, and cysteine 128.

This sequence belongs to the LuxS family. Homodimer. The cofactor is Fe cation.

It catalyses the reaction S-(5-deoxy-D-ribos-5-yl)-L-homocysteine = (S)-4,5-dihydroxypentane-2,3-dione + L-homocysteine. Functionally, involved in the synthesis of autoinducer 2 (AI-2) which is secreted by bacteria and is used to communicate both the cell density and the metabolic potential of the environment. The regulation of gene expression in response to changes in cell density is called quorum sensing. Catalyzes the transformation of S-ribosylhomocysteine (RHC) to homocysteine (HC) and 4,5-dihydroxy-2,3-pentadione (DPD). The sequence is that of S-ribosylhomocysteine lyase from Aliivibrio salmonicida (strain LFI1238) (Vibrio salmonicida (strain LFI1238)).